A 345-amino-acid chain; its full sequence is NADH-quinone oxidoreductase subunit 8 (345 aa).

8 helical membrane-spanning segments follow: residues 15-35, 82-102, 115-135, 161-181, 190-210, 240-262, 278-298, and 309-329; these read MLLQGLAVIAFVMGSLIFMVY, FVYFLAPFLSMMLALFAFVVI, VGILFIFAASSLEVYGVIMGG, LGLIIIGIIISTGSMNLTAIV, LLNWYWLPHLPMVVLFFVSAL, YLLFMAGEYIAMYLMCALLSLLF, WWMVIKMWFWFYMFAMVKAIV, and IGWKVFLPLSLGWVVLVAILA.

This sequence belongs to the complex I subunit 1 family. As to quaternary structure, NDH-1 is composed of at least 14 different subunits, Nqo1 to Nqo14. The complex has a L-shaped structure, with the hydrophobic arm (subunits Nqo7, Nqo8, Nqo10 to Nqo14) embedded in the inner membrane and the hydrophilic peripheral arm (subunits Nqo1 to Nqo6, Nqo9) protruding into the bacterial cytoplasm. The hydrophilic domain contains all the redox centers.

The protein resides in the cell inner membrane. The catalysed reaction is a quinone + NADH + 5 H(+)(in) = a quinol + NAD(+) + 4 H(+)(out). Functionally, NDH-1 shuttles electrons from NADH, via FMN and iron-sulfur (Fe-S) centers, to quinones in the respiratory chain. The immediate electron acceptor for the enzyme in this species is believed to be ubiquinone. Couples the redox reaction to proton translocation (for every two electrons transferred, four hydrogen ions are translocated across the cytoplasmic membrane), and thus conserves the redox energy in a proton gradient. This Paracoccus denitrificans protein is NADH-quinone oxidoreductase subunit 8.